The sequence spans 104 residues: uncharacterized protein (104 aa).

This is an uncharacterized protein from Dictyostelium discoideum (Social amoeba).